Consider the following 432-residue polypeptide: Glutamate-1-semialdehyde 2,1-aminomutase (432 aa).

Residue Lys266 is modified to N6-(pyridoxal phosphate)lysine.

It belongs to the class-III pyridoxal-phosphate-dependent aminotransferase family. HemL subfamily. Homodimer. Requires pyridoxal 5'-phosphate as cofactor.

Its subcellular location is the cytoplasm. The catalysed reaction is (S)-4-amino-5-oxopentanoate = 5-aminolevulinate. The protein operates within porphyrin-containing compound metabolism; protoporphyrin-IX biosynthesis; 5-aminolevulinate from L-glutamyl-tRNA(Glu): step 2/2. The sequence is that of Glutamate-1-semialdehyde 2,1-aminomutase from Janthinobacterium sp. (strain Marseille) (Minibacterium massiliensis).